The primary structure comprises 311 residues: MSYQDLKECKIITAFITPFHEDGSINFDAIPALIEHLLAHHTDGILLAGTTAESPTLTHDEELELFAAVQKVVNGRVPLIAGVGTNDTRDSIEFVKEVAEFGGFAAGLAIVPYYNKPSQEGMYQHFKAIADASDLPIIIYNIPGRVVVELTPETMLRLADYPNIIGVKECTSLANMAYLIEHKPEEFLIYTGEDGDAFHAMNLGADGVISVASHTNGDEMHEMFTAIAESDMKKAAAIQRKFIPKVNALFSYPSPAPVKAVLNYMGFEAGPTRLPLIPAPEEDAKRIIKVVVDGDYEATKATVTGVLRPDY.

A pyruvate-binding site is contributed by Thr51. The Proton donor/acceptor role is filled by Tyr140. Lys168 functions as the Schiff-base intermediate with substrate in the catalytic mechanism. Residue Ile209 coordinates pyruvate.

It belongs to the DapA family. In terms of assembly, homotetramer; dimer of dimers.

The protein localises to the cytoplasm. It carries out the reaction L-aspartate 4-semialdehyde + pyruvate = (2S,4S)-4-hydroxy-2,3,4,5-tetrahydrodipicolinate + H2O + H(+). It participates in amino-acid biosynthesis; L-lysine biosynthesis via DAP pathway; (S)-tetrahydrodipicolinate from L-aspartate: step 3/4. In terms of biological role, catalyzes the condensation of (S)-aspartate-beta-semialdehyde [(S)-ASA] and pyruvate to 4-hydroxy-tetrahydrodipicolinate (HTPA). This chain is 4-hydroxy-tetrahydrodipicolinate synthase, found in Streptococcus pneumoniae (strain Taiwan19F-14).